Consider the following 223-residue polypeptide: MAHDMYPNSPPRLTPDLLLRGYMAGIFPMAEARDDDAVFWVDPRQRGVLPLDGVHVSRKLRRFLARTEWTLSLNQDFAGVVAGCADRDETWINDQIFDAYTALHAMGFAHALEVREDGALIGGVYGVAIGTAFFGESMFSRRPNGSKVALVALCAHLRRCGYTLFDTQFVTPHLATMGAVEISRDSYRAQLRAALSAKADLTARPLPRTPAQIRAPGPGQPRS.

It belongs to the L/F-transferase family.

The protein localises to the cytoplasm. The enzyme catalyses N-terminal L-lysyl-[protein] + L-leucyl-tRNA(Leu) = N-terminal L-leucyl-L-lysyl-[protein] + tRNA(Leu) + H(+). It carries out the reaction N-terminal L-arginyl-[protein] + L-leucyl-tRNA(Leu) = N-terminal L-leucyl-L-arginyl-[protein] + tRNA(Leu) + H(+). It catalyses the reaction L-phenylalanyl-tRNA(Phe) + an N-terminal L-alpha-aminoacyl-[protein] = an N-terminal L-phenylalanyl-L-alpha-aminoacyl-[protein] + tRNA(Phe). Its function is as follows. Functions in the N-end rule pathway of protein degradation where it conjugates Leu, Phe and, less efficiently, Met from aminoacyl-tRNAs to the N-termini of proteins containing an N-terminal arginine or lysine. The polypeptide is Leucyl/phenylalanyl-tRNA--protein transferase (Dinoroseobacter shibae (strain DSM 16493 / NCIMB 14021 / DFL 12)).